Here is a 169-residue protein sequence, read N- to C-terminus: uncharacterized protein (169 aa).

S165 carries the phosphoserine modification.

This is an uncharacterized protein from Drosophila melanogaster (Fruit fly).